The chain runs to 168 residues: Variant surface antigen D (168 aa).

Residues 1–29 (MKKSIFSKKLLVSFGSLVTLAAIPLIAIS) form the signal peptide. The N-palmitoyl cysteine moiety is linked to residue C30. C30 is lipidated: S-diacylglycerol cysteine. Residues 33 to 168 (TNTDQSQQPG…STSTSNMNTR (136 aa)) form a disordered region. 2 stretches are compositionally biased toward low complexity: residues 35–44 (TDQSQQPGSG) and 52–71 (GTTTGTDSTTGGQTGSESGT). Residues 72 to 81 (TTGGQTGTTT) show a composition bias toward gly residues. 7 consecutive repeat copies span residues 81 to 92 (TGGQSDSTSTSK), 93 to 104 (EQGSSDSTSTSK), 105 to 116 (EQGSSDSTSTSK), 117 to 128 (EQGSSDSTSTSK), 129 to 140 (EQGSSDSTSTSK), 141 to 152 (EQGSSDSTSTSK), and 153 to 164 (EQGSSDSTSTSN). Positions 81–164 (TGGQSDSTST…GSSDSTSTSN (84 aa)) are 7 X 12 AA tandem repeats. Low complexity predominate over residues 82-168 (GGQSDSTSTS…STSTSNMNTR (87 aa)).

The protein resides in the cell membrane. Responsible for the antigenic diversity for host adaptation. Expression in E.coli of a construct containing vlpD, vlpE, and vlpF yields antigenically distinguishable products corresponding to each gene. The polypeptide is Variant surface antigen D (vlpD) (Mesomycoplasma hyorhinis (Mycoplasma hyorhinis)).